Reading from the N-terminus, the 190-residue chain is Ion-translocating oxidoreductase complex subunit B (190 aa).

The interval 1 to 26 is hydrophobic; sequence MTALWIAIAALSALGLLFGLVLGYAA. Positions 32–90 constitute a 4Fe-4S domain; the sequence is EEDPVAEQVDEILPQSQCGQCGYPGCRPYAEAVANGEMINKCAPGGEQVMLKLAELLNV. Residues C49, C52, C57, C73, C115, C118, C121, C125, C145, C148, C151, and C155 each coordinate [4Fe-4S] cluster. 4Fe-4S ferredoxin-type domains lie at 106–135 and 136–165; these read QVAY…GATR and AMHT…MRPV.

The protein belongs to the 4Fe4S bacterial-type ferredoxin family. RnfB subfamily. As to quaternary structure, the complex is composed of six subunits: RnfA, RnfB, RnfC, RnfD, RnfE and RnfG. The cofactor is [4Fe-4S] cluster.

Its subcellular location is the cell inner membrane. Part of a membrane-bound complex that couples electron transfer with translocation of ions across the membrane. The sequence is that of Ion-translocating oxidoreductase complex subunit B from Serratia proteamaculans (strain 568).